The primary structure comprises 457 residues: Bifunctional F420 biosynthesis protein FbiB (457 aa).

Positions methionine 1–glycine 253 are coenzyme F420:L-glutamate ligase. GTP is bound by residues leucine 29 to phenylalanine 32, serine 59, and lysine 64. Aspartate 118 contacts a divalent metal cation. Asparagine 121 is a binding site for GTP. The a divalent metal cation site is built by aspartate 159 and threonine 160. The tract at residues threonine 254 to lysine 457 is dehydro-coenzyme F420-0 reductase. FMN-binding positions include arginine 269–arginine 273 and alanine 297. Position 329 (aspartate 329) interacts with coenzyme F420-(gamma-Glu)n. FMN is bound by residues glycine 408 and arginine 445.

This sequence in the N-terminal section; belongs to the CofE family. Mg(2+) serves as cofactor. It depends on Mn(2+) as a cofactor. K(+) is required as a cofactor.

It carries out the reaction oxidized coenzyme F420-0 + GTP + L-glutamate = oxidized coenzyme F420-1 + GDP + phosphate + H(+). The enzyme catalyses oxidized coenzyme F420-1 + GTP + L-glutamate = oxidized coenzyme F420-2 + GDP + phosphate + H(+). The catalysed reaction is oxidized coenzyme F420-(gamma-L-Glu)(n) + GTP + L-glutamate = oxidized coenzyme F420-(gamma-L-Glu)(n+1) + GDP + phosphate + H(+). It catalyses the reaction oxidized coenzyme F420-0 + FMN + H(+) = dehydro coenzyme F420-0 + FMNH2. It functions in the pathway cofactor biosynthesis; coenzyme F420 biosynthesis. Functionally, bifunctional enzyme that catalyzes the GTP-dependent successive addition of multiple gamma-linked L-glutamates to the L-lactyl phosphodiester of 7,8-didemethyl-8-hydroxy-5-deazariboflavin (F420-0) to form polyglutamated F420 derivatives, and the FMNH2-dependent reduction of dehydro-F420-0 to form F420-0. This is Bifunctional F420 biosynthesis protein FbiB from Mycobacterium leprae (strain TN).